The following is a 678-amino-acid chain: UvrABC system protein B (678 aa).

One can recognise a Helicase ATP-binding domain in the interval 35-422 (EGVSDGLMFQ…ADNVVEQVVR (388 aa)). Residue 48 to 55 (GVTGSGKT) participates in ATP binding. The Beta-hairpin signature appears at 101-124 (YYDYYQPEAYVPTRDLFIEKDSSI). The Helicase C-terminal domain occupies 439-605 (QVDDLLGEIH…GVSKAVRELI (167 aa)). Residues 633–668 (AREIRRLEKLMMDHARNLEFEQAAAARDALNALKSR) form the UVR domain.

The protein belongs to the UvrB family. Forms a heterotetramer with UvrA during the search for lesions. Interacts with UvrC in an incision complex.

It is found in the cytoplasm. Its function is as follows. The UvrABC repair system catalyzes the recognition and processing of DNA lesions. A damage recognition complex composed of 2 UvrA and 2 UvrB subunits scans DNA for abnormalities. Upon binding of the UvrA(2)B(2) complex to a putative damaged site, the DNA wraps around one UvrB monomer. DNA wrap is dependent on ATP binding by UvrB and probably causes local melting of the DNA helix, facilitating insertion of UvrB beta-hairpin between the DNA strands. Then UvrB probes one DNA strand for the presence of a lesion. If a lesion is found the UvrA subunits dissociate and the UvrB-DNA preincision complex is formed. This complex is subsequently bound by UvrC and the second UvrB is released. If no lesion is found, the DNA wraps around the other UvrB subunit that will check the other stand for damage. The protein is UvrABC system protein B of Bordetella pertussis (strain Tohama I / ATCC BAA-589 / NCTC 13251).